The sequence spans 342 residues: CMP-N-acetylneuraminate-beta-galactosamide-alpha-2,3-sialyltransferase 1 (342 aa).

Over 1–10 (MVTVRKRNVK) the chain is Cytoplasmic. Residues 11 to 28 (VFTFAFVLITVTSFLLNY) traverse the membrane as a helical; Signal-anchor for type II membrane protein segment. Residues 29–342 (KHQVTMTTWD…IEKIKFFKGR (314 aa)) lie on the Lumenal side of the membrane. 3 disulfides stabilise this stretch: Cys61/Cys66, Cys63/Cys141, and Cys144/Cys283. Residue Asn81 is glycosylated (N-linked (GlcNAc...) asparagine). Gln107 serves as a coordination point for substrate. Asn116 carries N-linked (GlcNAc...) asparagine glycosylation. Substrate is bound by residues Asn149 and Asn172. Asn203 and Asn229 each carry an N-linked (GlcNAc...) asparagine glycan. Substrate-binding residues include Tyr232, Tyr268, Gly272, Gly292, and His301. The N-linked (GlcNAc...) asparagine glycan is linked to Asn306. His318 is a binding site for substrate. A glycan (N-linked (GlcNAc...) asparagine) is linked at Asn325.

The protein belongs to the glycosyltransferase 29 family. Post-translationally, the soluble form derives from the membrane form by proteolytic processing.

The protein resides in the golgi apparatus. The protein localises to the golgi stack membrane. It is found in the secreted. The catalysed reaction is a beta-D-galactosyl-(1-&gt;3)-N-acetyl-alpha-D-galactosaminyl derivative + CMP-N-acetyl-beta-neuraminate = an N-acetyl-alpha-neuraminyl-(2-&gt;3)-beta-D-galactosyl-(1-&gt;3)-N-acetyl-alpha-D-galactosaminyl derivative + CMP + H(+). Its pathway is protein modification; protein glycosylation. Its function is as follows. Responsible for the synthesis of the sequence NeuAc-alpha-2,3-Gal-beta-1,3-GalNAc- found on sugar chains O-linked to Thr or Ser and also as a terminal sequence on certain gangliosides. SIAT4A and SIAT4B sialylate the same acceptor substrates but exhibit different Km values. This Gallus gallus (Chicken) protein is CMP-N-acetylneuraminate-beta-galactosamide-alpha-2,3-sialyltransferase 1 (ST3GAL1).